The primary structure comprises 328 residues: G2/mitotic-specific cyclin-2 (328 aa).

The protein belongs to the cyclin family. Cyclin AB subfamily. As to quaternary structure, interacts with the CDC2 protein kinase to form a serine/threonine kinase holoenzyme complex also known as maturation promoting factor (MPF). The cyclin subunit imparts substrate specificity to the complex. Only expressed in organs with dividing cells.

Essential for the control of the cell cycle at the G2/M (mitosis) transition. This is G2/mitotic-specific cyclin-2 from Medicago sativa (Alfalfa).